We begin with the raw amino-acid sequence, 123 residues long: Small ribosomal subunit protein uS12 (123 aa).

Residues 9–28 (RNGRKRATKKTTTPALKGAP) form a disordered region. The span at 18-27 (KTTTPALKGA) shows a compositional bias: low complexity. At Asp89 the chain carries 3-methylthioaspartic acid.

The protein belongs to the universal ribosomal protein uS12 family. As to quaternary structure, part of the 30S ribosomal subunit. Contacts proteins S8 and S17. May interact with IF1 in the 30S initiation complex.

Functionally, with S4 and S5 plays an important role in translational accuracy. Its function is as follows. Interacts with and stabilizes bases of the 16S rRNA that are involved in tRNA selection in the A site and with the mRNA backbone. Located at the interface of the 30S and 50S subunits, it traverses the body of the 30S subunit contacting proteins on the other side and probably holding the rRNA structure together. The combined cluster of proteins S8, S12 and S17 appears to hold together the shoulder and platform of the 30S subunit. The polypeptide is Small ribosomal subunit protein uS12 (Desulfosudis oleivorans (strain DSM 6200 / JCM 39069 / Hxd3) (Desulfococcus oleovorans)).